A 267-amino-acid polypeptide reads, in one-letter code: Putative transcription factor Ovo-like 1 (267 aa).

C2H2-type zinc fingers lie at residues 118–140 (FTCH…MKCH), 146–168 (HLCT…VRTH), 174–197 (YKCS…KKIH), and 213–235 (YVCE…LKEH).

The protein localises to the nucleus. Functionally, putative transcription factor. Involved in hair formation and spermatogenesis. May function in the differentiation and/or maintenance of the urogenital system. In Bos taurus (Bovine), this protein is Putative transcription factor Ovo-like 1 (OVOL1).